A 206-amino-acid polypeptide reads, in one-letter code: 3-demethoxyubiquinol 3-hydroxylase (206 aa).

E55, E85, H88, E137, E169, and H172 together coordinate Fe cation.

It belongs to the COQ7 family. It depends on Fe cation as a cofactor.

Its subcellular location is the cell membrane. The enzyme catalyses a 5-methoxy-2-methyl-3-(all-trans-polyprenyl)benzene-1,4-diol + AH2 + O2 = a 3-demethylubiquinol + A + H2O. It participates in cofactor biosynthesis; ubiquinone biosynthesis. Functionally, catalyzes the hydroxylation of 2-nonaprenyl-3-methyl-6-methoxy-1,4-benzoquinol during ubiquinone biosynthesis. The sequence is that of 3-demethoxyubiquinol 3-hydroxylase from Laribacter hongkongensis (strain HLHK9).